Reading from the N-terminus, the 487-residue chain is (S)-N-methylcoclaurine 3'-hydroxylase isozyme 1 (487 aa).

Residues 4 to 24 (TVALIAVIISSILYLLFGGSG) traverse the membrane as a helical segment. Residue C429 coordinates heme.

Belongs to the cytochrome P450 family. Heme serves as cofactor.

It is found in the endoplasmic reticulum membrane. The protein resides in the microsome membrane. It carries out the reaction (S)-N-methylcoclaurine + reduced [NADPH--hemoprotein reductase] + O2 = (S)-3'-hydroxy-N-methylcoclaurine + oxidized [NADPH--hemoprotein reductase] + H2O + H(+). The protein operates within alkaloid biosynthesis; (S)-reticuline biosynthesis; (S)-reticuline from (S)-norcoclaurine: step 3/4. Functionally, 3'-hydroxylation of (S)-N-methylcoclaurine. In Eschscholzia californica (California poppy), this protein is (S)-N-methylcoclaurine 3'-hydroxylase isozyme 1 (CYP80B1).